We begin with the raw amino-acid sequence, 86 residues long: uncharacterized protein (86 aa).

2 helical membrane passes run 21–43 (VFWVGLVVYYGFVALCWIGEATA) and 53–75 (FWYASFLGTFLIPLFMSIIYFYF).

The protein resides in the cell membrane. This is an uncharacterized protein from Archaeoglobus fulgidus (strain ATCC 49558 / DSM 4304 / JCM 9628 / NBRC 100126 / VC-16).